Here is a 163-residue protein sequence, read N- to C-terminus: Large ribosomal subunit protein eL24y (163 aa).

Positions 119–133 (IKKTKDEKKAKKVEF) are enriched in basic and acidic residues. The disordered stretch occupies residues 119-163 (IKKTKDEKKAKKVEFASKQQKVKANFPKAAAASKGPKVGGGGGKR).

The protein belongs to the eukaryotic ribosomal protein eL24 family. In terms of assembly, interacts with REIL1 and REIL2. Component of the large ribosomal subunit. In terms of tissue distribution, ubiquitous.

It localises to the cytoplasm. Its subcellular location is the nucleus. The protein resides in the nucleolus. It is found in the nucleoplasm. In terms of biological role, might have an extraribosomal function in reinitiation of translation of ETTIN and MONOPTEROS genes that are involved in the auxin-mediated gynoecium patterning. Essential in leaf polarity establishment, probably having a role for translation in leaf dorsoventral patterning to specify leaf adaxial identity. This chain is Large ribosomal subunit protein eL24y, found in Arabidopsis thaliana (Mouse-ear cress).